The chain runs to 166 residues: ATP synthase subunit b (166 aa).

The chain crosses the membrane as a helical span at residues 7–27 (QFSLGLFILQIILFVGLILLL).

It belongs to the ATPase B chain family. F-type ATPases have 2 components, F(1) - the catalytic core - and F(0) - the membrane proton channel. F(1) has five subunits: alpha(3), beta(3), gamma(1), delta(1), epsilon(1). F(0) has three main subunits: a(1), b(2) and c(10-14). The alpha and beta chains form an alternating ring which encloses part of the gamma chain. F(1) is attached to F(0) by a central stalk formed by the gamma and epsilon chains, while a peripheral stalk is formed by the delta and b chains.

The protein resides in the cell inner membrane. F(1)F(0) ATP synthase produces ATP from ADP in the presence of a proton or sodium gradient. F-type ATPases consist of two structural domains, F(1) containing the extramembraneous catalytic core and F(0) containing the membrane proton channel, linked together by a central stalk and a peripheral stalk. During catalysis, ATP synthesis in the catalytic domain of F(1) is coupled via a rotary mechanism of the central stalk subunits to proton translocation. In terms of biological role, component of the F(0) channel, it forms part of the peripheral stalk, linking F(1) to F(0). This is ATP synthase subunit b from Flavobacterium psychrophilum (strain ATCC 49511 / DSM 21280 / CIP 103535 / JIP02/86).